The chain runs to 189 residues: Peptidyl-tRNA hydrolase (189 aa).

TRNA is bound at residue tyrosine 15. The active-site Proton acceptor is histidine 20. Phenylalanine 66, asparagine 68, and asparagine 114 together coordinate tRNA.

The protein belongs to the PTH family. In terms of assembly, monomer.

The protein resides in the cytoplasm. The catalysed reaction is an N-acyl-L-alpha-aminoacyl-tRNA + H2O = an N-acyl-L-amino acid + a tRNA + H(+). Its function is as follows. Hydrolyzes ribosome-free peptidyl-tRNAs (with 1 or more amino acids incorporated), which drop off the ribosome during protein synthesis, or as a result of ribosome stalling. In terms of biological role, catalyzes the release of premature peptidyl moieties from peptidyl-tRNA molecules trapped in stalled 50S ribosomal subunits, and thus maintains levels of free tRNAs and 50S ribosomes. The sequence is that of Peptidyl-tRNA hydrolase from Streptococcus pneumoniae (strain JJA).